A 360-amino-acid chain; its full sequence is Phospho-N-acetylmuramoyl-pentapeptide-transferase (360 aa).

10 helical membrane-spanning segments follow: residues 25-45 (RTIY…PWLI), 73-93 (TMGG…WADL), 94-114 (TNAY…IGFV), 134-154 (FCLQ…GLNG), 173-193 (PGYV…VNLT), 198-218 (GLAI…AYVA), 240-260 (VFCG…AYPA), 262-282 (IFMG…VAIL), 287-307 (LALV…ILQV), and 337-357 (KVIV…VSTL).

Belongs to the glycosyltransferase 4 family. MraY subfamily. Mg(2+) is required as a cofactor.

It localises to the cell inner membrane. It catalyses the reaction UDP-N-acetyl-alpha-D-muramoyl-L-alanyl-gamma-D-glutamyl-meso-2,6-diaminopimeloyl-D-alanyl-D-alanine + di-trans,octa-cis-undecaprenyl phosphate = di-trans,octa-cis-undecaprenyl diphospho-N-acetyl-alpha-D-muramoyl-L-alanyl-D-glutamyl-meso-2,6-diaminopimeloyl-D-alanyl-D-alanine + UMP. It participates in cell wall biogenesis; peptidoglycan biosynthesis. Functionally, catalyzes the initial step of the lipid cycle reactions in the biosynthesis of the cell wall peptidoglycan: transfers peptidoglycan precursor phospho-MurNAc-pentapeptide from UDP-MurNAc-pentapeptide onto the lipid carrier undecaprenyl phosphate, yielding undecaprenyl-pyrophosphoryl-MurNAc-pentapeptide, known as lipid I. The polypeptide is Phospho-N-acetylmuramoyl-pentapeptide-transferase (Desulfatibacillum aliphaticivorans).